The primary structure comprises 275 residues: Bifunctional protein FolD (275 aa).

Residues 161-163, serine 186, and threonine 227 contribute to the NADP(+) site; that span reads GRS.

Belongs to the tetrahydrofolate dehydrogenase/cyclohydrolase family. In terms of assembly, homodimer.

It catalyses the reaction (6R)-5,10-methylene-5,6,7,8-tetrahydrofolate + NADP(+) = (6R)-5,10-methenyltetrahydrofolate + NADPH. The enzyme catalyses (6R)-5,10-methenyltetrahydrofolate + H2O = (6R)-10-formyltetrahydrofolate + H(+). The protein operates within one-carbon metabolism; tetrahydrofolate interconversion. Catalyzes the oxidation of 5,10-methylenetetrahydrofolate to 5,10-methenyltetrahydrofolate and then the hydrolysis of 5,10-methenyltetrahydrofolate to 10-formyltetrahydrofolate. This Parafrankia sp. (strain EAN1pec) protein is Bifunctional protein FolD.